A 336-amino-acid chain; its full sequence is Fructose-1,6-bisphosphatase class 1 (336 aa).

Positions 90, 112, 114, and 115 each coordinate Mg(2+). Residues 115-118, Asn-211, and Lys-277 each bind substrate; that span reads DGSS. Glu-283 is a binding site for Mg(2+).

Belongs to the FBPase class 1 family. Homotetramer. Mg(2+) is required as a cofactor.

Its subcellular location is the cytoplasm. It carries out the reaction beta-D-fructose 1,6-bisphosphate + H2O = beta-D-fructose 6-phosphate + phosphate. The protein operates within carbohydrate biosynthesis; gluconeogenesis. In Pseudomonas fluorescens (strain Pf0-1), this protein is Fructose-1,6-bisphosphatase class 1.